The sequence spans 131 residues: Small nuclear ribonucleoprotein SmD3b (131 aa).

The Sm domain occupies 7-79 (IPVKLLHEAS…VRFMVIPDIL (73 aa)). Residues 96-131 (SSSLGVGRGRGAMRGKPAAGPGRGTGGRGAVPPVRR) are disordered.

This sequence belongs to the snRNP core protein family. In terms of tissue distribution, expressed in young seedlings, roots, leaves, flowers and immature siliques.

Its subcellular location is the cytoplasm. The protein resides in the cytosol. It localises to the nucleus. Functionally, core component of the spliceosomal U1, U2, U4 and U5 small nuclear ribonucleoproteins (snRNPs), the building blocks of the spliceosome. May play a major role in the splicing of cellular pre-mRNAs. Required for normal plant development. The protein is Small nuclear ribonucleoprotein SmD3b of Arabidopsis thaliana (Mouse-ear cress).